Consider the following 485-residue polypeptide: Benzaldehyde dehydrogenase YfmT (485 aa).

231–236 (GSTKVG) serves as a coordination point for NAD(+). Active-site residues include Glu-253 and Cys-287.

It belongs to the aldehyde dehydrogenase family.

It catalyses the reaction benzaldehyde + NAD(+) + H2O = benzoate + NADH + 2 H(+). The enzyme catalyses vanillin + NAD(+) + H2O = vanillate + NADH + 2 H(+). Its function is as follows. A benzaldehyde dehydrogenase able to act on substrates with 3- and 4-hydroxy and methoxy substitutions; converts vanillin (4-hydroxy-3-methoxybenzaldehyde) to vanillic acid in vitro. The physiological substrate is unknown. The chain is Benzaldehyde dehydrogenase YfmT (yfmT) from Bacillus subtilis (strain 168).